A 428-amino-acid polypeptide reads, in one-letter code: Serine--tRNA ligase (428 aa).

231 to 233 contacts L-serine; the sequence is TAE. Residues 262–264 and Val-278 each bind ATP; that span reads RRE. Position 285 (Glu-285) interacts with L-serine. Residue 349 to 352 coordinates ATP; it reads EVSS. Ser-384 is a binding site for L-serine.

This sequence belongs to the class-II aminoacyl-tRNA synthetase family. Type-1 seryl-tRNA synthetase subfamily. In terms of assembly, homodimer. The tRNA molecule binds across the dimer.

The protein resides in the cytoplasm. It catalyses the reaction tRNA(Ser) + L-serine + ATP = L-seryl-tRNA(Ser) + AMP + diphosphate + H(+). The catalysed reaction is tRNA(Sec) + L-serine + ATP = L-seryl-tRNA(Sec) + AMP + diphosphate + H(+). It functions in the pathway aminoacyl-tRNA biosynthesis; selenocysteinyl-tRNA(Sec) biosynthesis; L-seryl-tRNA(Sec) from L-serine and tRNA(Sec): step 1/1. In terms of biological role, catalyzes the attachment of serine to tRNA(Ser). Is also able to aminoacylate tRNA(Sec) with serine, to form the misacylated tRNA L-seryl-tRNA(Sec), which will be further converted into selenocysteinyl-tRNA(Sec). This is Serine--tRNA ligase from Chlamydia trachomatis serovar L2 (strain ATCC VR-902B / DSM 19102 / 434/Bu).